The following is a 156-amino-acid chain: Arginine repressor (156 aa).

This sequence belongs to the ArgR family.

The protein resides in the cytoplasm. It functions in the pathway amino-acid biosynthesis; L-arginine biosynthesis [regulation]. Functionally, regulates arginine biosynthesis genes. This chain is Arginine repressor, found in Salmonella paratyphi C (strain RKS4594).